The following is a 410-amino-acid chain: Glycylpeptide N-tetradecanoyltransferase (410 aa).

Tetradecanoyl-CoA-binding residues include phenylalanine 30, tryptophan 31, phenylalanine 162, leucine 163, cysteine 164, valine 165, serine 171, arginine 173, leucine 174, and alanine 175.

Belongs to the NMT family. As to quaternary structure, heterodimer composed of NMT and AK2; AK2 myristoylation stabilizes the complex.

The protein localises to the cytoplasm. It catalyses the reaction N-terminal glycyl-[protein] + tetradecanoyl-CoA = N-tetradecanoylglycyl-[protein] + CoA + H(+). Adds a myristoyl group to the N-terminal glycine residue of certain cellular proteins. Myristoylates adenylate kinase AK2. During the asexual blood stage, may myristoylate proteins such as ARO, CDPK1 and GAP45. Probably by mediating protein myristoylation, plays a role in the assembly of the inner membrane complex during the early stages of schizogony and in the formation of rhoptries in the late stages and thus merozoite egress. This is Glycylpeptide N-tetradecanoyltransferase from Plasmodium falciparum (isolate 3D7).